Here is a 466-residue protein sequence, read N- to C-terminus: Sucrose-6-phosphate hydrolase (466 aa).

Substrate-binding positions include 38–41 (LMND), Q57, 100–101 (YS), 159–160 (RD), and E218. Residue D41 is part of the active site.

This sequence belongs to the glycosyl hydrolase 32 family.

It is found in the cytoplasm. It carries out the reaction Hydrolysis of terminal non-reducing beta-D-fructofuranoside residues in beta-D-fructofuranosides.. It functions in the pathway glycan biosynthesis; sucrose metabolism. Enables the bacterium to metabolize sucrose as a sole carbon source. This is Sucrose-6-phosphate hydrolase (scrB) from Salmonella typhimurium.